Here is a 718-residue protein sequence, read N- to C-terminus: Protein Smaug homolog 1 (718 aa).

The residue at position 168 (Ser-168) is a Phosphoserine. Residues Ala-278–Asp-310 are disordered. Positions Ser-323–Glu-396 constitute an SAM domain. Disordered stretches follow at residues Ala-417–His-474 and Asn-572–Ile-601. Ser-420 carries the post-translational modification Phosphoserine. Thr-424 is modified (phosphothreonine). Positions Gly-453–Gly-466 are enriched in low complexity. Arg-573 carries the omega-N-methylarginine modification. Position 580 is a phosphoserine (Ser-580).

The protein belongs to the SMAUG family.

The protein localises to the cytoplasm. The protein resides in the cell projection. Its subcellular location is the dendrite. It localises to the synapse. It is found in the synaptosome. Acts as a translational repressor of SRE-containing messengers. In Macaca fascicularis (Crab-eating macaque), this protein is Protein Smaug homolog 1 (SAMD4A).